The primary structure comprises 29 residues: Serum amyloid P-component (29 aa).

In terms of domain architecture, Pentraxin (PTX) spans Leu-6–Glu-29.

This sequence belongs to the pentraxin family. Homopentamer. Pentraxin (or pentaxin) have a discoid arrangement of 5 non-covalently bound subunits. The cofactor is Ca(2+).

The protein localises to the secreted. This Hippoglossus hippoglossus (Atlantic halibut) protein is Serum amyloid P-component.